The following is a 170-amino-acid chain: Adenine phosphoribosyltransferase (170 aa).

Belongs to the purine/pyrimidine phosphoribosyltransferase family. In terms of assembly, homodimer.

It is found in the cytoplasm. The catalysed reaction is AMP + diphosphate = 5-phospho-alpha-D-ribose 1-diphosphate + adenine. Its pathway is purine metabolism; AMP biosynthesis via salvage pathway; AMP from adenine: step 1/1. In terms of biological role, catalyzes a salvage reaction resulting in the formation of AMP, that is energically less costly than de novo synthesis. In Trichodesmium erythraeum (strain IMS101), this protein is Adenine phosphoribosyltransferase.